The following is a 47-amino-acid chain: Large ribosomal subunit protein bL33C (47 aa).

It belongs to the bacterial ribosomal protein bL33 family.

The chain is Large ribosomal subunit protein bL33C from Staphylococcus aureus (strain MRSA252).